The sequence spans 648 residues: Probable alpha-galactosidase D (648 aa).

The signal sequence occupies residues 1–17 (MESIVWLLLLSPALVAG). 2 N-linked (GlcNAc...) asparagine glycosylation sites follow: asparagine 84 and asparagine 90. Cysteine 123 and cysteine 156 are joined by a disulfide. Aspartate 154 serves as the catalytic Nucleophile. 199–203 (EWGID) serves as a coordination point for substrate. Aspartate 221 serves as the catalytic Proton donor. 3 N-linked (GlcNAc...) asparagine glycosylation sites follow: asparagine 339, asparagine 505, and asparagine 572.

This sequence belongs to the glycosyl hydrolase 27 family.

The protein resides in the secreted. It catalyses the reaction Hydrolysis of terminal, non-reducing alpha-D-galactose residues in alpha-D-galactosides, including galactose oligosaccharides, galactomannans and galactolipids.. Its function is as follows. Hydrolyzes a variety of simple alpha-D-galactoside as well as more complex molecules such as oligosaccharides and polysaccharides. This is Probable alpha-galactosidase D (aglD) from Neosartorya fischeri (strain ATCC 1020 / DSM 3700 / CBS 544.65 / FGSC A1164 / JCM 1740 / NRRL 181 / WB 181) (Aspergillus fischerianus).